The chain runs to 543 residues: Glutamyl-tRNA(Gln) amidotransferase subunit A, chloroplastic/mitochondrial (543 aa).

Active-site charge relay system residues include Lys123 and Ser198. The active-site Acyl-ester intermediate is Ser222.

It belongs to the amidase family. GatA subfamily. In terms of assembly, subunit of the heterotrimeric GatCAB amidotransferase (AdT) complex, composed of A, B and C subunits.

The protein localises to the mitochondrion. It is found in the plastid. It localises to the chloroplast stroma. It catalyses the reaction L-glutamyl-tRNA(Gln) + L-glutamine + ATP + H2O = L-glutaminyl-tRNA(Gln) + L-glutamate + ADP + phosphate + H(+). Its function is as follows. Allows the formation of correctly charged Gln-tRNA(Gln) through the transamidation of misacylated Glu-tRNA(Gln) in chloroplasts and mitochondria. The reaction takes place in the presence of glutamine and ATP through an activated gamma-phospho-Glu-tRNA(Gln). The chain is Glutamyl-tRNA(Gln) amidotransferase subunit A, chloroplastic/mitochondrial from Oryza sativa subsp. indica (Rice).